The primary structure comprises 233 residues: Bcl-2-like protein 1 (233 aa).

The BH4 signature appears at Ser-4–Trp-24. A disordered region spans residues Ser-28–His-71. Ser-49 carries the phosphoserine; by PLK3 modification. Ser-62 bears the Phosphoserine; by CDK1 mark. Residues Val-86–Arg-100 carry the BH3 motif. The short motif at Glu-129–Gly-148 is the BH1 element. The BH2 motif lies at Pro-180 to Tyr-195. A helical membrane pass occupies residues Phe-210–Leu-226.

The protein belongs to the Bcl-2 family. Homodimer. Interacts with BCL2L11. Interacts with BAD. Interacts with PGAM5. Interacts with HEBP2. Interacts with p53/TP53 and BBC3; interaction with BBC3 disrupts the interaction with p53/TP53. Interacts with ATP5F1A and ATP5F1B; the interactions mediate the association of isoform Bcl-X(L) with the mitochondrial membrane ATP synthase F(1)F(0) ATP synthase. Interacts with VDAC1. Interacts with BCL2L11 (via BH3). Interacts with RNF183. Interacts with GIMAP3/IAN4 and GIMAP5/IAN5. Interacts with GIMAP5 and HSPA8/HSC70; the interaction between HSPA8 and BCL2L1 is impaired in the absence of GIMAP5. Interacts with isoform 4 of CLU; this interaction releases and activates BAX and promotes cell death. As to quaternary structure, forms heterodimers with BAX, BAK or BCL2; heterodimerization with BAX does not seem to be required for anti-apoptotic activity. Interacts with isoform 1 of SIVA1; the interaction inhibits the anti-apoptotic activity. Interacts with IKZF3. Interacts with RTL10/BOP. Interacts with DNM1L and CLTA; DNM1L and BCL2L1 isoform BCL-X(L) may form a complex in synaptic vesicles that also contains clathrin and MFF. Interacts (via the loop between motifs BH4 and BH3) with NLRP1 (via LRR repeats), but not with NLRP2, NLRP3, NLRP4, PYCARD, nor MEFV. Interacts with BECN1. Post-translationally, proteolytically cleaved by caspases during apoptosis. The cleaved protein, lacking the BH4 motif, has pro-apoptotic activity. In terms of processing, phosphorylated on Ser-62 by CDK1. This phosphorylation is partial in normal mitotic cells, but complete in G2-arrested cells upon DNA-damage, thus promoting subsequent apoptosis probably by triggering caspases-mediated proteolysis. Phosphorylated by PLK3, leading to regulate the G2 checkpoint and progression to cytokinesis during mitosis. Phosphorylation at Ser-49 appears during the S phase and G2, disappears rapidly in early mitosis during prometaphase, metaphase and early anaphase, and re-appears during telophase and cytokinesis. Ubiquitinated by RNF183 during prolonged ER stress, leading to degradation by the proteosome. As to expression, bcl-X(S) is expressed at high levels in cells that undergo a high rate of turnover, such as developing lymphocytes. In contrast, Bcl-X(L) is found in tissues containing long-lived postmitotic cells, such as adult brain.

Its subcellular location is the mitochondrion inner membrane. It localises to the mitochondrion outer membrane. The protein localises to the mitochondrion matrix. It is found in the cytoplasmic vesicle. The protein resides in the secretory vesicle. Its subcellular location is the synaptic vesicle membrane. It localises to the cytoplasm. The protein localises to the cytosol. It is found in the cytoskeleton. The protein resides in the microtubule organizing center. Its subcellular location is the centrosome. It localises to the nucleus membrane. Functionally, potent inhibitor of cell death. Inhibits activation of caspases. Appears to regulate cell death by blocking the voltage-dependent anion channel (VDAC) by binding to it and preventing the release of the caspase activator, CYC1, from the mitochondrial membrane. Also acts as a regulator of G2 checkpoint and progression to cytokinesis during mitosis. Isoform Bcl-X(L) also regulates presynaptic plasticity, including neurotransmitter release and recovery, number of axonal mitochondria as well as size and number of synaptic vesicle clusters. During synaptic stimulation, increases ATP availability from mitochondria through regulation of mitochondrial membrane ATP synthase F(1)F(0) activity and regulates endocytic vesicle retrieval in hippocampal neurons through association with DMN1L and stimulation of its GTPase activity in synaptic vesicles. May attenuate inflammation impairing NLRP1-inflammasome activation, hence CASP1 activation and IL1B release. In terms of biological role, isoform Bcl-X(S) promotes apoptosis. This is Bcl-2-like protein 1 (BCL2L1) from Homo sapiens (Human).